We begin with the raw amino-acid sequence, 336 residues long: Effector SCP41 (336 aa).

Residues 1–19 form the signal peptide; that stretch reads MRTETASLLLLAALSVAEE. Disordered regions lie at residues 59 to 99 and 189 to 230; these read LFSP…STNN and PVGN…GQKG. The segment covering 63–74 has biased composition (low complexity); that stretch reads QQQQQQQQQQQQ.

In terms of assembly, interacts with A.thaliana CBP60G; the interaction is direct. Interacts with A.thaliana SARD1. Interacts with G.hirsutum CBP60B.

The protein resides in the secreted. Its subcellular location is the host nucleus. Its function is as follows. Effector that binds transcription regulators in the host plant to suppress the host's innate immune response. Inhibits the host plant transcription regulators CBP60G and SARD1. This is Effector SCP41 from Verticillium dahliae (strain VdLs.17 / ATCC MYA-4575 / FGSC 10137) (Verticillium wilt).